The primary structure comprises 260 residues: uncharacterized protein (260 aa).

The PNPLA domain maps to 8 to 166; that stretch reads LALGSGGARG…VDRIPVSVVK (159 aa). A GXSXG motif is present at residues 39 to 43; that stretch reads GSSMG. The Nucleophile role is filled by S41. Residue D153 is the Proton acceptor of the active site. A DGA/G motif is present at residues 153–155; the sequence is DGA.

It belongs to the NTE family.

This is an uncharacterized protein from Bacillus subtilis (strain 168).